Reading from the N-terminus, the 298-residue chain is Biphenyl-2,3-diol 1,2-dioxygenase (298 aa).

VOC domains lie at 5 to 119 and 143 to 264; these read SLGY…IYYG and GLGH…YGWS. Fe cation is bound by residues His-146, His-210, and Glu-260.

The protein belongs to the extradiol ring-cleavage dioxygenase family. In terms of assembly, homooctamer. The enzyme is composed of two planar tetramers rotated at 45 degrees relative to each other, with a channel in the middle. Requires Fe(2+) as cofactor.

The enzyme catalyses biphenyl-2,3-diol + O2 = 2-hydroxy-6-oxo-6-phenylhexa-2,4-dienoate + H(+). It functions in the pathway xenobiotic degradation; biphenyl degradation; 2-hydroxy-2,4-pentadienoate and benzoate from biphenyl: step 3/4. Its function is as follows. Shows a preference for catechols with groups immediately adjacent to the hydroxyl substituents. The polypeptide is Biphenyl-2,3-diol 1,2-dioxygenase (bphC) (Paraburkholderia xenovorans (strain LB400)).